Here is a 301-residue protein sequence, read N- to C-terminus: Rhodopsin (301 aa).

The Extracellular segment spans residues 1 to 18 (LHMIHLHWYQYPPMNPMM). Residues 19–43 (YPLLLIFMLFTGILCLAGNFVTIWV) form a helical membrane-spanning segment. Topologically, residues 44–55 (FMNTKSLRTPAN) are cytoplasmic. A helical transmembrane segment spans residues 56 to 78 (LLVVNLAMSDFLMMFTMFPPMMV). Residues 79-92 (TCYYHTWTLGPTFC) are Extracellular-facing. Cys92 and Cys169 are joined by a disulfide. Residues 93–115 (QVYAFLGNLCGCASIWTMVFITF) traverse the membrane as a helical segment. The short motif at 116-118 (DRY) is the 'Ionic lock' involved in activated form stabilization element. The Cytoplasmic segment spans residues 116–134 (DRYNVIVKGVAGEPLSNKK). The helical transmembrane segment at 135 to 155 (AAMWILSVWVLSTAWCMAPFF) threads the bilayer. Residues 156-182 (GWNSYVPEGNLTGCGTDYLSEDILSRS) are Extracellular-facing. Asn165 is a glycosylation site (N-linked (GlcNAc...) asparagine). Residues 183–204 (YLYIYSTWVYFLPLTITIYCYV) form a helical membrane-spanning segment. The Cytoplasmic portion of the chain corresponds to 205 to 245 (FIIKAVAAHEKGMRDQAKKMGIKSLRNEEAQKTSAECRLAK). The chain crosses the membrane as a helical span at residues 246–267 (IAMTTVALWFIAWTPYLLINWV). Topologically, residues 268-278 (GMFARSYLSPV) are extracellular. Residues 279–300 (YTIWGYVFAKANAVYNPIVYAI) form a helical membrane-spanning segment. The residue at position 288 (Lys288) is an N6-(retinylidene)lysine.

This sequence belongs to the G-protein coupled receptor 1 family. Opsin subfamily. In terms of assembly, homodimer. Interacts with GNAQ. In terms of processing, contains one covalently linked retinal chromophore.

It is found in the cell projection. The protein localises to the rhabdomere membrane. In terms of biological role, photoreceptor required for image-forming vision at low light intensity. Can use both retinal and 3-dehydroretinal as visual pigment. Light-induced isomerization of 11-cis to all-trans retinal triggers a conformational change that activates signaling via G-proteins. Signaling via GNAQ probably mediates the activation of phospholipase C. The polypeptide is Rhodopsin (RHO) (Faxonius virilis (Virile crayfish)).